We begin with the raw amino-acid sequence, 233 residues long: Ribonuclease 3 (233 aa).

The region spanning 4–126 is the RNase III domain; it reads LNKLMERLGH…IVGAIYIDAG (123 aa). Glu39 serves as a coordination point for Mg(2+). Residue Asp43 is part of the active site. Mg(2+) is bound by residues Asp112 and Glu115. Residue Glu115 is part of the active site. Positions 153–222 constitute a DRBM domain; sequence DAKSLLQEWL…AKRFLELLDD (70 aa).

It belongs to the ribonuclease III family. As to quaternary structure, homodimer. Requires Mg(2+) as cofactor.

The protein resides in the cytoplasm. The enzyme catalyses Endonucleolytic cleavage to 5'-phosphomonoester.. In terms of biological role, digests double-stranded RNA. Involved in the processing of primary rRNA transcript to yield the immediate precursors to the large and small rRNAs (23S and 16S). Processes some mRNAs, and tRNAs when they are encoded in the rRNA operon. Processes pre-crRNA and tracrRNA of type II CRISPR loci if present in the organism. This chain is Ribonuclease 3, found in Coxiella burnetii (strain Dugway 5J108-111).